Reading from the N-terminus, the 593-residue chain is DNA mismatch repair protein MutL (593 aa).

This sequence belongs to the DNA mismatch repair MutL/HexB family.

Functionally, this protein is involved in the repair of mismatches in DNA. It is required for dam-dependent methyl-directed DNA mismatch repair. May act as a 'molecular matchmaker', a protein that promotes the formation of a stable complex between two or more DNA-binding proteins in an ATP-dependent manner without itself being part of a final effector complex. The chain is DNA mismatch repair protein MutL from Leptospira interrogans serogroup Icterohaemorrhagiae serovar copenhageni (strain Fiocruz L1-130).